The chain runs to 502 residues: Cytochrome P450 monooxygenase pyr9 (502 aa).

A helical transmembrane segment spans residues 5 to 25 (EDASIGTVWVTCLLAVGLYFI). Asparagine 205, asparagine 291, and asparagine 372 each carry an N-linked (GlcNAc...) asparagine glycan. Cysteine 437 serves as a coordination point for heme.

This sequence belongs to the cytochrome P450 family. Heme is required as a cofactor.

The protein localises to the membrane. It participates in secondary metabolite biosynthesis; terpenoid biosynthesis. Functionally, cytochrome P450 monooxygenase; part of the gene cluster that mediates the biosynthesis of pyripyropene A, a specific human acyl-coenzyme A:cholesterol acyltransferase 2 inhibitor. The first step of the pathway is the synthesis of nicotinyl-CoA from nicotinic acid by the nicotinic acid-CoA ligase pyr1. Nicotinyl-CoA is then a substrate of polyketide synthase pyr2 to produce 4-hydroxy-6-(3-pyridinyl)-2H-pyran-2-one (HPPO) which is further prenylated by the polyprenyl transferase pyr6 to yield farnesyl-HPPO. The next steps consist of an epoxidation of farnesyl-HPPO to epoxyfarnesyl-HPPO by FAD-dependent monooxygenase pyr5 and a cyclization of the terpenoid portion by the terpene cyclase pyr4 to yield deacetyl-pyripyropene E. The 2 cytochrome P450 monooxygenases pyr3 and pyr9, and the 2 acetyltransferases pyr7 and pyr8 are involved in the conversion of deacetyl-pyripyropene E into pyripyropene A through several cycles of oxidation and acetylation steps. Pyr7 acetylates deacetyl-pyripyropene E to pyripyropene E which is oxidized to 11-deacetyl-pyripyropene O by pyr3, which is in turn acetylated into pyripyropene O by pyr8. Pyripyropene O is then oxidized to deacetyl-pyripyropene A by pyr9. Deacetyl-pyripyropene A is finally acetylated to pyripyropene A by pyr8. The protein is Cytochrome P450 monooxygenase pyr9 of Aspergillus fumigatus (strain ATCC MYA-4609 / CBS 101355 / FGSC A1100 / Af293) (Neosartorya fumigata).